A 373-amino-acid chain; its full sequence is Galactoside alpha-(1,2)-fucosyltransferase 1 (373 aa).

At 1–12 (MWPPSRRQLCLA) the chain is on the cytoplasmic side. The helical; Signal-anchor for type II membrane protein transmembrane segment at 13-29 (FLLVCALSAFSFLLHLH) threads the bilayer. Residues 30–373 (QDLFRNGLAL…GSWRPWRFLG (344 aa)) are Lumenal-facing. N-linked (GlcNAc...) asparagine glycosylation is found at Asn-66, Asn-301, and Asn-327.

Belongs to the glycosyltransferase 11 family. In terms of tissue distribution, brain.

The protein localises to the golgi apparatus. It is found in the golgi stack membrane. It catalyses the reaction a beta-D-galactosyl-(1-&gt;4)-N-acetyl-beta-D-glucosaminyl derivative + GDP-beta-L-fucose = an alpha-L-Fuc-(1-&gt;2)-beta-D-Gal-(1-&gt;4)-beta-D-GlcNAc derivative + GDP + H(+). The enzyme catalyses a ganglioside GA1 + GDP-beta-L-fucose = a ganglioside Fuc-GA1 + GDP + H(+). The catalysed reaction is a beta-D-Gal-(1-&gt;3)-beta-D-GlcNAc-(1-&gt;3)-beta-D-Gal-(1-&gt;4)-beta-D-Glc-(1&lt;-&gt;1')-Cer(d18:1(4E)) + GDP-beta-L-fucose = alpha-L-fucosyl-(1-&gt;2)- beta-D-galactosyl-(1-&gt;3)-N-acetyl-beta-D-glucosaminyl-(1-&gt;3)-beta-D-galactosyl-(1-&gt;4)-beta-D-glucosyl-(1&lt;-&gt;1')-N-acylsphing-4-enine + GDP + H(+). It carries out the reaction a neolactoside nLc4Cer(d18:1(4E)) + GDP-beta-L-fucose = a neolactoside IV(2)-alpha-Fuc-nLc4Cer(d18:1(4E)) + GDP + H(+). It catalyses the reaction a ganglioside GM1 + GDP-beta-L-fucose = a ganglioside Fuc-GM1 + GDP + H(+). The enzyme catalyses beta-D-galactosyl-(1-&gt;3)-N-acetyl-D-galactosamine + GDP-beta-L-fucose = alpha-L-fucosyl-(1-&gt;2)-beta-D-galactosyl-(1-&gt;3)-N-acetyl-D-galactosamine + GDP + H(+). Its pathway is protein modification; protein glycosylation. Its function is as follows. Catalyzes the transfer of L-fucose, from a guanosine diphosphate-beta-L-fucose, to the terminal galactose residue of glycoconjugates through an alpha(1,2) linkage leading to H antigen synthesis that is an intermediate substrate in the synthesis of ABO blood group antigens. H antigen is essential for maturation of the glomerular layer of the main olfactory bulb, in cell migration and early cell-cell contacts during tumor associated angiogenesis. Preferentially fucosylates soluble lactose and to a lesser extent fucosylates glycolipids gangliosides GA1 and GM1a. This Oryctolagus cuniculus (Rabbit) protein is Galactoside alpha-(1,2)-fucosyltransferase 1.